The following is a 92-amino-acid chain: Small ribosomal subunit protein uS17 (92 aa).

Belongs to the universal ribosomal protein uS17 family. In terms of assembly, part of the 30S ribosomal subunit.

One of the primary rRNA binding proteins, it binds specifically to the 5'-end of 16S ribosomal RNA. In Mycoplasma mobile (strain ATCC 43663 / 163K / NCTC 11711) (Mesomycoplasma mobile), this protein is Small ribosomal subunit protein uS17.